The following is a 173-amino-acid chain: Shikimate kinase 1 (173 aa).

14-19 (GAGKST) contacts ATP. Ser-18 serves as a coordination point for Mg(2+). Substrate contacts are provided by Asp-36, Arg-60, and Gly-82. Residue Arg-120 coordinates ATP. Arg-140 is a binding site for substrate. Residue Gln-157 coordinates ATP.

The protein belongs to the shikimate kinase family. As to quaternary structure, monomer. Requires Mg(2+) as cofactor.

Its subcellular location is the cytoplasm. It catalyses the reaction shikimate + ATP = 3-phosphoshikimate + ADP + H(+). Its pathway is metabolic intermediate biosynthesis; chorismate biosynthesis; chorismate from D-erythrose 4-phosphate and phosphoenolpyruvate: step 5/7. Its function is as follows. Catalyzes the specific phosphorylation of the 3-hydroxyl group of shikimic acid using ATP as a cosubstrate. This is Shikimate kinase 1 from Sodalis glossinidius (strain morsitans).